We begin with the raw amino-acid sequence, 261 residues long: tRNA pseudouridine synthase A (261 aa).

Aspartate 51 acts as the Nucleophile in catalysis. Substrate is bound at residue tyrosine 109.

Belongs to the tRNA pseudouridine synthase TruA family. As to quaternary structure, homodimer.

The enzyme catalyses uridine(38/39/40) in tRNA = pseudouridine(38/39/40) in tRNA. Functionally, formation of pseudouridine at positions 38, 39 and 40 in the anticodon stem and loop of transfer RNAs. This is tRNA pseudouridine synthase A from Shewanella loihica (strain ATCC BAA-1088 / PV-4).